Here is a 690-residue protein sequence, read N- to C-terminus: Adhesion G protein-coupled receptor L4 (690 aa).

An N-terminal signal peptide occupies residues 1 to 19; it reads MKRLPLLVVFSTLLNCSYT. An EGF-like 1 domain is found at 20 to 57; the sequence is QNCTKTPCLPNAKCEIRNGIEACYCNMGFSGNGVTICE. Residues 20–432 lie on the Extracellular side of the membrane; the sequence is QNCTKTPCLP…DYNILTRITQ (413 aa). N21 carries N-linked (GlcNAc...) asparagine glycosylation. 6 disulfide bridges follow: C22/C33, C27/C42, C44/C56, C62/C75, C69/C84, and C86/C107. Residues 58 to 108 form the EGF-like 2; calcium-binding domain; it reads DDNECGNLTQSCGENANCTNTEGSYYCMCVPGFRSSSNQDRFITNDGTVCI. Residues N64 and N74 are each glycosylated (N-linked (GlcNAc...) asparagine). N127, N177, N188, N249, N381, and N395 each carry an N-linked (GlcNAc...) asparagine glycan. One can recognise a GAIN-B domain in the interval 244–419; the sequence is TEFDTNSTDI…AILMSSGPSI (176 aa). Cystine bridges form between C370/C401 and C389/C403. The GPS stretch occupies residues 370–419; that stretch reads CAFWNYSPDTMNGSWSSEGCELTYSNETHTSCRCNHLTHFAILMSSGPSI. Residues 433 to 453 traverse the membrane as a helical segment; that stretch reads LGIIISLICLAICIFTFWFFS. Over 454–460 the chain is Cytoplasmic; the sequence is EIQSTRT. Residues 461 to 481 form a helical membrane-spanning segment; the sequence is TIHKNLCCSLFLAELVFLVGI. Residues 482–499 are Extracellular-facing; the sequence is NTNTNKLFCSIIAGLLHY. The chain crosses the membrane as a helical span at residues 500 to 520; the sequence is FFLAAFAWMCIEGIHLYLIVV. Over 521 to 532 the chain is Cytoplasmic; that stretch reads GVIYNKGFLHKN. The chain crosses the membrane as a helical span at residues 533–553; that stretch reads FYIFGYLSPAVVVGFSAALGY. Residues 554–573 lie on the Extracellular side of the membrane; it reads RYYGTTKVCWLSTENNFIWS. The helical transmembrane segment at 574–594 threads the bilayer; it reads FIGPACLIILVNLLAFGVIIY. At 595 to 618 the chain is on the cytoplasmic side; it reads KVFRHTAGLKPEVSCFENIRSCAR. The chain crosses the membrane as a helical span at residues 619 to 639; the sequence is GALALLFLLGTTWIFGVLHVV. Residues 640–646 are Extracellular-facing; sequence HASVVTA. Residues 647-667 form a helical membrane-spanning segment; it reads YLFTVSNAFQGMFIFLFLCVL. Residues 668–690 are Cytoplasmic-facing; the sequence is SRKIQEEYYRLFKNVPCCFGCLR.

This sequence belongs to the G-protein coupled receptor 2 family. Adhesion G-protein coupled receptor (ADGR) subfamily. In terms of assembly, heterodimer of 2 chains generated by proteolytic processing; the large extracellular N-terminal fragment and the membrane-bound C-terminal fragment predominantly remain associated and non-covalently linked. Post-translationally, glycosylated. In terms of processing, proteolytically cleaved into 2 subunits, an extracellular alpha subunit and a seven-transmembrane subunit. As to expression, detected in the majority of epithelial cells in tumor and normal tissues. Expressed also in human umbilical vein endothelial cells.

The protein localises to the cell membrane. Endothelial orphan receptor that acts as a key regulator of angiogenesis. The polypeptide is Adhesion G protein-coupled receptor L4 (Homo sapiens (Human)).